The sequence spans 234 residues: Large ribosomal subunit protein bL25 (234 aa).

The disordered stretch occupies residues 1 to 24; sequence MATVMELKATARPKSGKGAARAER.

Belongs to the bacterial ribosomal protein bL25 family. CTC subfamily. Part of the 50S ribosomal subunit; part of the 5S rRNA/L5/L18/L25 subcomplex. Contacts the 5S rRNA. Binds to the 5S rRNA independently of L5 and L18.

In terms of biological role, this is one of the proteins that binds to the 5S RNA in the ribosome where it forms part of the central protuberance. The protein is Large ribosomal subunit protein bL25 of Rhodopseudomonas palustris (strain BisB5).